A 37-amino-acid chain; its full sequence is Large ribosomal subunit protein bL36A (37 aa).

The protein belongs to the bacterial ribosomal protein bL36 family.

In Leifsonia xyli subsp. xyli (strain CTCB07), this protein is Large ribosomal subunit protein bL36A.